The primary structure comprises 275 residues: Diaminopimelate epimerase (275 aa).

The substrate site is built by N12, Q45, and N65. C74 functions as the Proton donor in the catalytic mechanism. Residues 75 to 76 (GN), N158, N191, and 209 to 210 (ER) each bind substrate. C218 (proton acceptor) is an active-site residue. 219-220 (GT) contacts substrate.

This sequence belongs to the diaminopimelate epimerase family. As to quaternary structure, homodimer.

It localises to the cytoplasm. The catalysed reaction is (2S,6S)-2,6-diaminopimelate = meso-2,6-diaminopimelate. It functions in the pathway amino-acid biosynthesis; L-lysine biosynthesis via DAP pathway; DL-2,6-diaminopimelate from LL-2,6-diaminopimelate: step 1/1. Its function is as follows. Catalyzes the stereoinversion of LL-2,6-diaminopimelate (L,L-DAP) to meso-diaminopimelate (meso-DAP), a precursor of L-lysine and an essential component of the bacterial peptidoglycan. The chain is Diaminopimelate epimerase from Shewanella sp. (strain MR-4).